The following is a 564-amino-acid chain: MSDQLQMTDGMHIIVEALKQNNIDTIYGVVGIPVTDMARHAQAEGIRYIGFRHEQSAGYAAAASGFLTQKPGICLTVSAPGFLNGLTALANATVNGFPMIMISGSSDRAIVDLQQGDYEELDQMNAAKPYAKAAFRVNQPQDLGIALARAIRVSVSGRPGGVYLDLPANVLAATMEKDEALTTIVKVENPSPALLPCPKSVTSAISLLAKAERPLIILGKGAAYSQADEQLREFIESAQIPFLPMSMAKGILEDTHPLSAAAARSFALANADVVMLVGARLNWLLAHGKKGWAADTQFIQLDIEPQEIDSNRPIAVPVVGDIASSMQGMLAELKQNTFTTPLVWRDILNIHKQQNAQKMHEKLSTDTQPLNYFNALSAVRDVLRENQDIYLVNEGANTLDNARNIIDMYKPRRRLDCGTWGVMGIGMGYAIGASVTSGSPVVAIEGDSAFGFSGMEIETICRYNLPVTIVIFNNGGIYRGDGVDLSGAGAPSPTDLLHHARYDKLMDAFRGVGYNVTTTDELRHALTTGIQSRKPTIINVVIDPAAGTESGHITKLNPKQVAGN.

Substrate contacts are provided by Ile32 and Tyr118. ADP-binding residues include Arg158 and Lys220. 261–265 is a substrate binding site; sequence AAARS. 3 residues coordinate ADP: Arg280, Asp302, and Ile322. A substrate-binding site is contributed by Asn355. Thiamine diphosphate is bound by residues Tyr372 and 396–398; that span reads ANT. 403 to 404 provides a ligand contact to substrate; sequence RN. 421 to 423 contributes to the thiamine diphosphate binding site; sequence GVM. Asp447 contributes to the Mg(2+) binding site. Thiamine diphosphate is bound at residue 448–449; that stretch reads SA. Mg(2+) is bound by residues Asn474 and Gly476. Tyr478 provides a ligand contact to thiamine diphosphate. 550-552 serves as a coordination point for substrate; that stretch reads SGH.

This sequence belongs to the TPP enzyme family. In terms of assembly, homotetramer; dimer of dimers. Mg(2+) serves as cofactor. Thiamine diphosphate is required as a cofactor.

The enzyme catalyses oxalyl-CoA + H(+) = formyl-CoA + CO2. It functions in the pathway metabolic intermediate degradation; oxalate degradation; CO(2) and formate from oxalate: step 2/2. Involved in the catabolism of oxalate and in the adapatation to low pH via the induction of the oxalate-dependent acid tolerance response (ATR). Catalyzes the decarboxylation of oxalyl-CoA to yield carbon dioxide and formyl-CoA. The sequence is that of Oxalyl-CoA decarboxylase (oxc) from Escherichia coli O157:H7.